The chain runs to 320 residues: MNHTSDTALLIVNLGTPEAPTAAAVRRYLGEFLSDRRVVSIPPLFWKPLLHMVILPIRGPRSASKYAKVWLQEGSPLSVYTRRIAEGLTQHLPDWRVAWAMRYGAPALTKALDALQAQQVRRIVILPLYPQYSTTTTASVQDVVEAWCKRTPQVQVECIQDYAEDPAWVAAVAASIRRHWQAHGRSEKLMFSFHGLPQRVANNGDPYPQRCQVSASLIAAALNLNESEWVLGYQSRFGAERWLQPYAEPTLWALAESGIRRFDLVCPGFSVDCLETLEEVALGFSETLAARGATMRYIPCLNDDPAHVQALAGLAQRALP.

Positions 194 and 275 each coordinate Fe cation.

Belongs to the ferrochelatase family.

The protein localises to the cytoplasm. It catalyses the reaction heme b + 2 H(+) = protoporphyrin IX + Fe(2+). It participates in porphyrin-containing compound metabolism; protoheme biosynthesis; protoheme from protoporphyrin-IX: step 1/1. Functionally, catalyzes the ferrous insertion into protoporphyrin IX. The polypeptide is Ferrochelatase (Xylella fastidiosa (strain M23)).